The following is a 68-amino-acid chain: Pleurocidin-like peptide WF4 (68 aa).

The N-terminal stretch at 1-22 is a signal peptide; the sequence is MKFTATFLMMFIFVLMVEPGEC. Positions 48-68 are excised as a propeptide; that stretch reads GEQQDLDKRAVDEDPNVIVFE.

This sequence belongs to the pleurocidin family.

The protein resides in the secreted. Its function is as follows. Antimicrobial peptide. This is Pleurocidin-like peptide WF4 (ple4) from Pseudopleuronectes americanus (Winter flounder).